The primary structure comprises 891 residues: Metabotropic glutamate receptor-like protein N (891 aa).

At 1–399 (MKLYTHKINR…FKPISKTIEY (399 aa)) the chain is on the extracellular side. N-linked (GlcNAc...) asparagine glycosylation is found at Asn52, Asn85, Asn88, Asn125, Asn132, Asn224, Asn298, Asn312, Asn320, Asn325, Asn353, Asn363, and Asn375. The tract at residues 52–91 (NNSNSNSNNNNNNNNNNNNNNNNNNNNNNNNNNNNSNNSN) is disordered. Residues 400 to 420 (GITIVSSILIGALIIIQICII) form a helical membrane-spanning segment. At 421–433 (KYKNKPSFKSASP) the chain is on the cytoplasmic side. A helical membrane pass occupies residues 434–454 (TFLIFIVIGGIFVYIGVIIWV). The Extracellular portion of the chain corresponds to 455 to 461 (SGVNVFT). The chain crosses the membrane as a helical span at residues 462–482 (CNAKFWLISLGLTTMIGGIVV). The Cytoplasmic segment spans residues 483–505 (KNFRIWLIFDNPKLYHIKITNLQ). Residues 506 to 526 (LLPWVLGMFLLNVFLLSLITG) traverse the membrane as a helical segment. Residues 527–555 (LGKLTPFKVFPNDEKFSSYEIQCEMMDGG) lie on the Extracellular side of the membrane. Residues 556-576 (LIALYFLLGYFAIIVMIGIFV) traverse the membrane as a helical segment. Residues 577–592 (SWKIRIVDIEEFNESK) are Cytoplasmic-facing. The helical transmembrane segment at 593–613 (SVAYSLYSIVFCLLIIAPLTI) threads the bilayer. Residues 614 to 625 (SKTGHNTEILCS) are Extracellular-facing. Residues 626–646 (GFIFIVAAIITIMFIPKFWAL) form a helical membrane-spanning segment. The Cytoplasmic segment spans residues 647–891 (KIYGAEGSNE…SDSNSDSIIQ (245 aa)). Disordered regions lie at residues 660–689 (QSSSSTSKRKNKSSTTNDPTNLDSISKKSS), 742–827 (NEMT…ILTP), and 869–891 (DEVIENSDSESESSDSNSDSIIQ). Over residues 742 to 767 (NEMTYNDDPTYTEPSEQPTYTESSEQ) the composition is skewed to polar residues. Over residues 772 to 782 (PRTLTATPRTN) the composition is skewed to low complexity. Polar residues predominate over residues 783–820 (DLTTPRTNDLTTPRTNDLITPRTNDLSTPRTNDLNTPR). Positions 872–881 (IENSDSESES) are enriched in acidic residues. Over residues 882-891 (SDSNSDSIIQ) the composition is skewed to low complexity.

This sequence belongs to the G-protein coupled receptor 3 family. GABA-B receptor subfamily.

The protein localises to the membrane. The protein is Metabotropic glutamate receptor-like protein N (grlN) of Dictyostelium discoideum (Social amoeba).